We begin with the raw amino-acid sequence, 174 residues long: UPF0316 protein lwe1794 (174 aa).

The next 3 membrane-spanning stretches (helical) occupy residues 4–24, 36–56, and 62–82; these read GLFIVVTIFVVNILYVTIYTV, LAALSSVFEMIIYVVALSLVL, and IANVLAYAIGFGVGVIVGMKI.

This sequence belongs to the UPF0316 family.

Its subcellular location is the cell membrane. The protein is UPF0316 protein lwe1794 of Listeria welshimeri serovar 6b (strain ATCC 35897 / DSM 20650 / CCUG 15529 / CIP 8149 / NCTC 11857 / SLCC 5334 / V8).